We begin with the raw amino-acid sequence, 458 residues long: UDP-N-acetylglucosamine 1-carboxyvinyltransferase (458 aa).

22-23 (KN) is a phosphoenolpyruvate binding site. Residue R94 participates in UDP-N-acetyl-alpha-D-glucosamine binding. D119 functions as the Proton donor in the catalytic mechanism. 2 residues coordinate UDP-N-acetyl-alpha-D-glucosamine: D309 and V331.

The protein belongs to the EPSP synthase family. MurA subfamily.

It is found in the cytoplasm. It carries out the reaction phosphoenolpyruvate + UDP-N-acetyl-alpha-D-glucosamine = UDP-N-acetyl-3-O-(1-carboxyvinyl)-alpha-D-glucosamine + phosphate. It participates in cell wall biogenesis; peptidoglycan biosynthesis. Functionally, cell wall formation. Adds enolpyruvyl to UDP-N-acetylglucosamine. The sequence is that of UDP-N-acetylglucosamine 1-carboxyvinyltransferase from Chlamydia pneumoniae (Chlamydophila pneumoniae).